Here is a 356-residue protein sequence, read N- to C-terminus: TPR repeat-containing protein P27G11.02 (356 aa).

A mitochondrion-targeting transit peptide spans 1–20 (MRMQWIWKSRRSLQNVFIRR). TPR repeat units lie at residues 194 to 227 (SRLF…TMAN) and 290 to 323 (AAAF…RKDD).

It is found in the mitochondrion. This is TPR repeat-containing protein P27G11.02 from Schizosaccharomyces pombe (strain 972 / ATCC 24843) (Fission yeast).